The following is a 363-amino-acid chain: tRNA/tmRNA (uracil-C(5))-methyltransferase (363 aa).

S-adenosyl-L-methionine contacts are provided by Gln187, Tyr215, Asn220, Glu236, and Asp296. Cys321 (nucleophile) is an active-site residue. The active-site Proton acceptor is the Glu355.

It belongs to the class I-like SAM-binding methyltransferase superfamily. RNA M5U methyltransferase family. TrmA subfamily.

The enzyme catalyses uridine(54) in tRNA + S-adenosyl-L-methionine = 5-methyluridine(54) in tRNA + S-adenosyl-L-homocysteine + H(+). It carries out the reaction uridine(341) in tmRNA + S-adenosyl-L-methionine = 5-methyluridine(341) in tmRNA + S-adenosyl-L-homocysteine + H(+). Functionally, dual-specificity methyltransferase that catalyzes the formation of 5-methyluridine at position 54 (m5U54) in all tRNAs, and that of position 341 (m5U341) in tmRNA (transfer-mRNA). The polypeptide is tRNA/tmRNA (uracil-C(5))-methyltransferase (Pseudomonas aeruginosa (strain LESB58)).